Here is a 254-residue protein sequence, read N- to C-terminus: Thiazole synthase (254 aa).

The active-site Schiff-base intermediate with DXP is K95. 1-deoxy-D-xylulose 5-phosphate-binding positions include G156, 182–183 (AG), and 204–205 (NT).

Belongs to the ThiG family. As to quaternary structure, homotetramer. Forms heterodimers with either ThiH or ThiS.

It localises to the cytoplasm. It carries out the reaction [ThiS sulfur-carrier protein]-C-terminal-Gly-aminoethanethioate + 2-iminoacetate + 1-deoxy-D-xylulose 5-phosphate = [ThiS sulfur-carrier protein]-C-terminal Gly-Gly + 2-[(2R,5Z)-2-carboxy-4-methylthiazol-5(2H)-ylidene]ethyl phosphate + 2 H2O + H(+). It functions in the pathway cofactor biosynthesis; thiamine diphosphate biosynthesis. Catalyzes the rearrangement of 1-deoxy-D-xylulose 5-phosphate (DXP) to produce the thiazole phosphate moiety of thiamine. Sulfur is provided by the thiocarboxylate moiety of the carrier protein ThiS. In vitro, sulfur can be provided by H(2)S. In Vibrio atlanticus (strain LGP32) (Vibrio splendidus (strain Mel32)), this protein is Thiazole synthase.